The primary structure comprises 299 residues: Probable endonuclease 4 (299 aa).

Residues His-68, His-110, Glu-145, Asp-179, His-182, His-214, Asp-227, His-229, and Glu-259 each coordinate Zn(2+).

The protein belongs to the AP endonuclease 2 family. Zn(2+) serves as cofactor.

The catalysed reaction is Endonucleolytic cleavage to 5'-phosphooligonucleotide end-products.. Endonuclease IV plays a role in DNA repair. It cleaves phosphodiester bonds at apurinic or apyrimidinic (AP) sites, generating a 3'-hydroxyl group and a 5'-terminal sugar phosphate. This chain is Probable endonuclease 4, found in Exiguobacterium sibiricum (strain DSM 17290 / CCUG 55495 / CIP 109462 / JCM 13490 / 255-15).